We begin with the raw amino-acid sequence, 214 residues long: Putative AgrB-like protein (214 aa).

5 helical membrane-spanning segments follow: residues 41 to 61 (IISV…LIFL), 82 to 102 (CTLL…SSFF), 109 to 129 (IIVF…FKFA), 154 to 174 (ILTI…NLGW), and 182 to 202 (LSII…GNIL).

Belongs to the AgrB family.

The protein resides in the cell membrane. Its function is as follows. May be involved in the proteolytic processing of a quorum sensing system signal molecule precursor. This chain is Putative AgrB-like protein, found in Clostridium perfringens (strain SM101 / Type A).